A 299-amino-acid chain; its full sequence is Protein NSG2 (299 aa).

Over 1–108 (MANRGEPDPK…PSRTRQTRQN (108 aa)) the chain is Cytoplasmic. A Phosphoserine modification is found at Ser-90. The chain crosses the membrane as a helical span at residues 109–129 (ILHYLQAVLILSLSGFAYHEL). Over 130-161 (SRNLHDNHLLHPDFASRPLLLGVKLCNWLSNG) the chain is Lumenal. A helical membrane pass occupies residues 162–182 (VLPNWLGYGVEGLLFGSVVPI). Residues 183 to 237 (LDNIFQTEVVKSSVHHDSLTSVIRSINAMLGVTFGIRKIQWNSSLQAAGAWGLLN) lie on the Cytoplasmic side of the membrane. Residues 238 to 258 (IILWLFFDGSISMLMSCICIG) traverse the membrane as a helical segment. The Lumenal segment spans residues 259-268 (VGCCISCYKD). Residues 269-289 (IIDGSQFLYFMDFYFLGSLMF) form a helical membrane-spanning segment. Over 290–299 (GKLGRYLYSH) the chain is Cytoplasmic.

Belongs to the INSIG family.

It localises to the endoplasmic reticulum membrane. Its function is as follows. Stabilizes the HMG-CoA reductase HMG2 by preventing its HRD1-dependent degradation. Binds directly to the sterol-sensing domain (SSD)-containing transmembrane region of HMG2, promoting its folding to protect it from degradation. This Saccharomyces cerevisiae (strain ATCC 204508 / S288c) (Baker's yeast) protein is Protein NSG2 (NSG2).